The sequence spans 955 residues: 2-oxoglutarate dehydrogenase E1 component (955 aa).

The protein belongs to the alpha-ketoglutarate dehydrogenase family. In terms of assembly, homodimer. Part of the 2-oxoglutarate dehydrogenase (OGDH) complex composed of E1 (2-oxoglutarate dehydrogenase), E2 (dihydrolipoamide succinyltransferase) and E3 (dihydrolipoamide dehydrogenase); the complex contains multiple copies of the three enzymatic components (E1, E2 and E3). The cofactor is thiamine diphosphate.

The enzyme catalyses N(6)-[(R)-lipoyl]-L-lysyl-[protein] + 2-oxoglutarate + H(+) = N(6)-[(R)-S(8)-succinyldihydrolipoyl]-L-lysyl-[protein] + CO2. Functionally, E1 component of the 2-oxoglutarate dehydrogenase (OGDH) complex which catalyzes the decarboxylation of 2-oxoglutarate, the first step in the conversion of 2-oxoglutarate to succinyl-CoA and CO(2). The polypeptide is 2-oxoglutarate dehydrogenase E1 component (Bacillus cereus (strain AH820)).